The chain runs to 251 residues: Phosphate import ATP-binding protein PstB (251 aa).

Positions 5 to 246 (IEIENFSAYY…PKNRLTEEYL (242 aa)) constitute an ABC transporter domain. 37 to 44 (GPSGCGKT) is a binding site for ATP.

It belongs to the ABC transporter superfamily. Phosphate importer (TC 3.A.1.7) family. As to quaternary structure, the complex is composed of two ATP-binding proteins (PstB), two transmembrane proteins (PstC and PstA) and a solute-binding protein (PstS).

Its subcellular location is the cell inner membrane. The enzyme catalyses phosphate(out) + ATP + H2O = ADP + 2 phosphate(in) + H(+). Part of the ABC transporter complex PstSACB involved in phosphate import. Responsible for energy coupling to the transport system. The sequence is that of Phosphate import ATP-binding protein PstB from Thermotoga maritima (strain ATCC 43589 / DSM 3109 / JCM 10099 / NBRC 100826 / MSB8).